A 338-amino-acid chain; its full sequence is Lumican (338 aa).

An N-terminal signal peptide occupies residues 1 to 18 (MNVCAFSLALALVGSVSG). Gln19 carries the pyrrolidone carboxylic acid modification. A sulfotyrosine mark is found at Tyr20, Tyr21, Tyr23, and Tyr30. Positions 28-66 (FMYGQISPNCAPECNCPHSYPTAMYCDDLKLKSVPMVPP) constitute an LRRNT domain. LRR repeat units follow at residues 67-88 (GIKY…AFEN), 91-114 (DLQW…VFSK), 117-137 (QLKK…PLPK), 138-159 (SLQD…DGLV), 160-181 (NLTF…ASLK), 185-205 (SLEY…GLPT), 206-227 (SLLT…YFKR), and 230-250 (GLQY…PGNS). N-linked (GlcNAc...) (keratan sulfate) asparagine glycosylation occurs at Asn88. N-linked (GlcNAc...) (keratan sulfate) asparagine glycosylation is present at Asn127. N-linked (GlcNAc...) (keratan sulfate) asparagine glycosylation occurs at Asn160. N-linked (GlcNAc...) (keratan sulfate) asparagine glycosylation is present at Asn252. LRR repeat units follow at residues 255–276 (SLLE…NENL) and 277–296 (ENYY…SFCK). A disulfide bridge links Cys295 with Cys328. Ser304 carries the phosphoserine modification. Residues 305–326 (KIKHLRLDGNPLTQSSLPPDMY) form an LRR 11 repeat.

The protein belongs to the small leucine-rich proteoglycan (SLRP) family. SLRP class II subfamily. Binds to laminin. In terms of processing, contains keratan sulfate. Post-translationally, cys-37, Cys-41, Cys-43 and Cys-53 are involved in disulfide bonds. In terms of tissue distribution, cornea and other tissues.

The protein localises to the secreted. Its subcellular location is the extracellular space. It is found in the extracellular matrix. This is Lumican (Lum) from Mus musculus (Mouse).